The following is a 325-amino-acid chain: HTH-type transcriptional regulator BbuR (325 aa).

The region spanning 15–72 is the HTH lysR-type domain; that stretch reads LDTDLLNVFCWVAKTQSFSRAAAELGTSQPVITRKIGRLEECLGVALFVRSNRGCVLT. Residues 32-51 constitute a DNA-binding region (H-T-H motif); the sequence is FSRAAAELGTSQPVITRKIG.

This sequence belongs to the LysR transcriptional regulatory family.

The chain is HTH-type transcriptional regulator BbuR (bbuR) from Bordetella bronchiseptica (strain ATCC BAA-588 / NCTC 13252 / RB50) (Alcaligenes bronchisepticus).